Here is a 358-residue protein sequence, read N- to C-terminus: Alanine racemase (358 aa).

Lys35 functions as the Proton acceptor; specific for D-alanine in the catalytic mechanism. At Lys35 the chain carries N6-(pyridoxal phosphate)lysine. Arg130 contacts substrate. The active-site Proton acceptor; specific for L-alanine is Tyr255. Met303 provides a ligand contact to substrate.

It belongs to the alanine racemase family. Pyridoxal 5'-phosphate is required as a cofactor.

The catalysed reaction is L-alanine = D-alanine. It participates in amino-acid biosynthesis; D-alanine biosynthesis; D-alanine from L-alanine: step 1/1. Catalyzes the interconversion of L-alanine and D-alanine. May also act on other amino acids. This Shewanella sp. (strain MR-7) protein is Alanine racemase (alr).